The primary structure comprises 218 residues: Ras-related protein RABE1e (218 aa).

22–29 (GDSGVGKS) serves as a coordination point for GTP. Positions 44–52 (FITTIGIDF) match the Effector region motif. Residues 70–74 (DTAGQ), 128–131 (NKAD), and 159–160 (SA) each bind GTP. A disordered region spans residues 182–218 (TESDTKAEPQGIKITKQDANKASSSSTNEKSACCSYV). Over residues 201 to 211 (NKASSSSTNEK) the composition is skewed to polar residues. S-geranylgeranyl cysteine attachment occurs at residues cysteine 214 and cysteine 215.

This sequence belongs to the small GTPase superfamily. Rab family. Interacts with PI5K2.

The protein resides in the golgi apparatus membrane. Its subcellular location is the cell membrane. Functionally, involved in membrane trafficking from the Golgi to the plasma membrane. The sequence is that of Ras-related protein RABE1e (RABE1E) from Arabidopsis thaliana (Mouse-ear cress).